A 344-amino-acid chain; its full sequence is DNA-directed RNA polymerase subunit alpha (344 aa).

Positions 1-246 are alpha N-terminal domain (alpha-NTD); sequence MPVEKFLKDF…EFLFPLIDFE (246 aa). Positions 259 to 344 are alpha C-terminal domain (alpha-CTD); that stretch reads ESSNLLDMSI…VLSKNVKISE (86 aa).

It belongs to the RNA polymerase alpha chain family. Homodimer. The RNAP catalytic core consists of 2 alpha, 1 beta, 1 beta' and 1 omega subunit. When a sigma factor is associated with the core the holoenzyme is formed, which can initiate transcription.

It catalyses the reaction RNA(n) + a ribonucleoside 5'-triphosphate = RNA(n+1) + diphosphate. In terms of biological role, DNA-dependent RNA polymerase catalyzes the transcription of DNA into RNA using the four ribonucleoside triphosphates as substrates. This chain is DNA-directed RNA polymerase subunit alpha, found in Borrelia garinii subsp. bavariensis (strain ATCC BAA-2496 / DSM 23469 / PBi) (Borreliella bavariensis).